The chain runs to 362 residues: Glutaminase-asparaginase (362 aa).

The signal sequence occupies residues 1 to 25; it reads MKPLLHAFAPGVMALMLLLPQAAQA. Residues 35–362 form the Asparaginase/glutaminase domain; that stretch reads SNVVILATGG…KELQRIFWEY (328 aa). Residue Thr45 is the Acyl-ester intermediate of the active site. Substrate-binding positions include Ser92 and 125–126; that span reads TD.

This sequence belongs to the asparaginase 1 family. Homotetramer.

It localises to the periplasm. It catalyses the reaction L-glutamine + H2O = L-glutamate + NH4(+). The catalysed reaction is L-asparagine + H2O = L-aspartate + NH4(+). In Pseudomonas aeruginosa (strain ATCC 15692 / DSM 22644 / CIP 104116 / JCM 14847 / LMG 12228 / 1C / PRS 101 / PAO1), this protein is Glutaminase-asparaginase (ansB).